Here is a 463-residue protein sequence, read N- to C-terminus: Lactaldehyde dehydrogenase (463 aa).

NAD(+) is bound at residue 220–225; sequence GSSKVG. Active-site residues include Glu240 and Cys274.

It belongs to the aldehyde dehydrogenase family. In terms of assembly, homotetramer.

It carries out the reaction (S)-lactaldehyde + NAD(+) + H2O = (S)-lactate + NADH + 2 H(+). The protein operates within cofactor biosynthesis; coenzyme F420 biosynthesis. In terms of biological role, involved in F420 biosynthesis through the oxidation of lactaldehyde to lactate. The substrate preference order is propionaldehyde &gt; DL-lactaldehyde, DL-glyceraldehyde &gt; crotonaldehyde &gt; glycolaldehyde &gt; acetaldehyde, acrolein &gt; formaldehyde. No activity was observed towards methylglyoxal or glyceraldehyde-3-phosphate. Has a preference for NAD over NADP. In Methanocaldococcus jannaschii (strain ATCC 43067 / DSM 2661 / JAL-1 / JCM 10045 / NBRC 100440) (Methanococcus jannaschii), this protein is Lactaldehyde dehydrogenase.